We begin with the raw amino-acid sequence, 79 residues long: Small ribosomal subunit protein uS17 (79 aa).

Belongs to the universal ribosomal protein uS17 family. Part of the 30S ribosomal subunit.

In terms of biological role, one of the primary rRNA binding proteins, it binds specifically to the 5'-end of 16S ribosomal RNA. This Bartonella henselae (strain ATCC 49882 / DSM 28221 / CCUG 30454 / Houston 1) (Rochalimaea henselae) protein is Small ribosomal subunit protein uS17.